Here is a 200-residue protein sequence, read N- to C-terminus: THO complex subunit tho5 (200 aa).

Belongs to the THOC5 family. In terms of assembly, component of the THO and TREX complexes.

Its subcellular location is the cytoplasm. The protein resides in the nucleus. In terms of biological role, component the THO subcomplex of the TREX complex, which operates in coupling transcription elongation to mRNA export. The THO complex is recruited to transcribed genes and moves along the gene with the elongating polymerase during transcription. THO is important for stabilizing nascent RNA in the RNA polymerase II elongation complex by preventing formation of DNA:RNA hybrids behind the elongating polymerase. The THO complex is also required to maintain TRAMP complex occupancy at sites of snoRNA transcription thus promoting exosome-mediated degradation of snoRNA precursors. The sequence is that of THO complex subunit tho5 from Schizosaccharomyces pombe (strain 972 / ATCC 24843) (Fission yeast).